The chain runs to 332 residues: L-lactate dehydrogenase A chain (332 aa).

Residue Ala-2 is modified to N-acetylalanine. The residue at position 5 (Lys-5) is an N6-acetyllysine; alternate. The residue at position 5 (Lys-5) is an N6-succinyllysine; alternate. Lys-14 is subject to N6-acetyllysine. At Thr-18 the chain carries Phosphothreonine. 29-57 (GAVGMACAISILMKDLADELALVDVIEDK) contacts NAD(+). An N6-acetyllysine; alternate modification is found at Lys-57. Lys-57 participates in a covalent cross-link: Glycyl lysine isopeptide (Lys-Gly) (interchain with G-Cter in SUMO2); alternate. Lys-81 carries the N6-acetyllysine modification. Arg-99 is a binding site for NAD(+). Arg-106 is a binding site for substrate. An N6-acetyllysine; alternate modification is found at Lys-118. N6-succinyllysine; alternate is present on Lys-118. Lys-126 is subject to N6-acetyllysine. Substrate contacts are provided by Asn-138 and Arg-169. The active-site Proton acceptor is His-193. N6-acetyllysine occurs at positions 224 and 232. Tyr-239 is subject to Phosphotyrosine. Lys-243 carries the post-translational modification N6-acetyllysine. Thr-248 serves as a coordination point for substrate. Thr-309 bears the Phosphothreonine mark. Ser-310 is modified (phosphoserine). Lys-318 is modified (N6-acetyllysine; alternate). Lys-318 carries the post-translational modification N6-succinyllysine; alternate. Position 322 is a phosphothreonine (Thr-322).

It belongs to the LDH/MDH superfamily. LDH family. As to quaternary structure, homotetramer. Interacts with PTEN upstream reading frame protein MP31. ISGylated.

It localises to the cytoplasm. It carries out the reaction (S)-lactate + NAD(+) = pyruvate + NADH + H(+). It participates in fermentation; pyruvate fermentation to lactate; (S)-lactate from pyruvate: step 1/1. Its function is as follows. Interconverts simultaneously and stereospecifically pyruvate and lactate with concomitant interconversion of NADH and NAD(+). The protein is L-lactate dehydrogenase A chain (LDHA) of Pan troglodytes (Chimpanzee).